The following is an 886-amino-acid chain: Adhesion G protein-coupled receptor E1 (886 aa).

A signal peptide spans 1-20; the sequence is MRGFNLLLFWGCCVMHSWEG. Over 21–599 the chain is Extracellular; sequence HIRPTRKPNT…IMASGELTMD (579 aa). Residues 31–79 enclose the EGF-like 1 domain; the sequence is KGNNCRDSTLCPAYATCTNTVDSYYCACKQGFLSSNGQNHFKDPGVRCK. 18 disulfide bridges follow: Cys-35-Cys-47, Cys-41-Cys-56, Cys-58-Cys-78, Cys-84-Cys-97, Cys-91-Cys-106, Cys-108-Cys-130, Cys-136-Cys-148, Cys-142-Cys-157, Cys-159-Cys-170, Cys-176-Cys-188, Cys-182-Cys-197, Cys-199-Cys-219, Cys-225-Cys-235, Cys-229-Cys-244, Cys-246-Cys-266, Cys-272-Cys-285, Cys-279-Cys-294, and Cys-296-Cys-315. The EGF-like 2; calcium-binding domain maps to 80-131; sequence DIDECSQSPQPCGPNSSCKNLSGRYKCSCLDGFSSPTGNDWVPGKPGNFSCT. 3 N-linked (GlcNAc...) asparagine glycosylation sites follow: Asn-94, Asn-99, and Asn-127. The EGF-like 3; calcium-binding domain maps to 132-171; sequence DINECLTSSVCPEHSDCVNSMGSYSCSCQVGFISRNSTCE. N-linked (GlcNAc...) asparagine glycosylation occurs at Asn-167. Residues 172–220 enclose the EGF-like 4; calcium-binding domain; that stretch reads DVDECADPRACPEHATCNNTVGNYSCFCNPGFESSSGHLSFQGLKASCE. N-linked (GlcNAc...) asparagine glycosylation is found at Asn-189 and Asn-194. Residues 221 to 267 enclose the EGF-like 5; calcium-binding domain; it reads DIDECTEMCPINSTCTNTPGSYFCTCHPGFAPSNGQLNFTDQGVECR. Asn-232 and Asn-258 each carry an N-linked (GlcNAc...) asparagine glycan. Residues 268–316 form the EGF-like 6; calcium-binding domain; it reads DIDECRQDPSTCGPNSICTNALGSYSCGCIAGFHPNPEGSQKDGNFSCQ. N-linked (GlcNAc...) asparagine glycans are attached at residues Asn-312, Asn-366, Asn-375, and Asn-448. One can recognise a GAIN-B domain in the interval 431-597; it reads EYLDIESKVI…AVIMASGELT (167 aa). 2 cysteine pairs are disulfide-bonded: Cys-550/Cys-579 and Cys-567/Cys-581. The segment at 550 to 597 is GPS; that stretch reads CVSWSTDVKGGRWTSFGCVILEASETYTICSCNQMANLAVIMASGELT. A helical transmembrane segment spans residues 600–627; sequence FSLYIISHVGIIISLVCLVLAIATFLLC. The Cytoplasmic portion of the chain corresponds to 628–634; that stretch reads RSIRNHN. Residues 635-656 traverse the membrane as a helical segment; sequence TYLHLHLCVCLLLAKTLFLAGI. Over 657-666 the chain is Extracellular; that stretch reads HKTDNKMGCA. The helical transmembrane segment at 667 to 690 threads the bilayer; the sequence is IIAGFLHYLFLACFFWMLVEAVIL. Residues 691–709 lie on the Cytoplasmic side of the membrane; it reads FLMVRNLKVVNYFSSRNIK. Residues 710–731 form a helical membrane-spanning segment; the sequence is MLHICAFGYGLPMLVVVISASV. The Extracellular portion of the chain corresponds to 732 to 747; the sequence is QPQGYGMHNRCWLNTE. A helical membrane pass occupies residues 748 to 776; it reads TGFIWSFLGPVCTVIVINSLLLTWTLWIL. At 777 to 794 the chain is on the cytoplasmic side; sequence RQRLSSVNAEVSTLKDTR. Residues 795-814 form a helical membrane-spanning segment; the sequence is LLTFKAFAQLFILGCSWVLG. The Extracellular portion of the chain corresponds to 815-829; that stretch reads IFQIGPVAGVMAYLF. Residues 830 to 852 traverse the membrane as a helical segment; the sequence is TIINSLQGAFIFLIHCLLNGQVR. Topologically, residues 853-886 are cytoplasmic; sequence EEYKRWITGKTKPSSQSQTSRILLSSMPSASKTG. The tract at residues 862–886 is disordered; the sequence is KTKPSSQSQTSRILLSSMPSASKTG. Residues 863-886 are compositionally biased toward polar residues; the sequence is TKPSSQSQTSRILLSSMPSASKTG.

This sequence belongs to the G-protein coupled receptor 2 family. Adhesion G-protein coupled receptor (ADGR) subfamily. In terms of tissue distribution, expression is restricted to eosinophils.

It localises to the cell membrane. Its function is as follows. Orphan receptor involved in cell adhesion and probably in cell-cell interactions specifically involving cells of the immune system. May play a role in regulatory T-cells (Treg) development. The protein is Adhesion G protein-coupled receptor E1 of Homo sapiens (Human).